We begin with the raw amino-acid sequence, 663 residues long: Probable rhamnogalacturonate lyase B (663 aa).

An N-terminal signal peptide occupies residues M1–A19. 10 N-linked (GlcNAc...) asparagine glycosylation sites follow: N27, N110, N143, N239, N285, N495, N535, N569, N597, and N638.

The protein belongs to the polysaccharide lyase 4 family.

It localises to the secreted. The catalysed reaction is Endotype eliminative cleavage of L-alpha-rhamnopyranosyl-(1-&gt;4)-alpha-D-galactopyranosyluronic acid bonds of rhamnogalacturonan I domains in ramified hairy regions of pectin leaving L-rhamnopyranose at the reducing end and 4-deoxy-4,5-unsaturated D-galactopyranosyluronic acid at the non-reducing end.. Pectinolytic enzymes consist of four classes of enzymes: pectin lyase, polygalacturonase, pectin methylesterase and rhamnogalacturonase. Degrades the rhamnogalacturonan I (RG-I) backbone of pectin. In Aspergillus flavus (strain ATCC 200026 / FGSC A1120 / IAM 13836 / NRRL 3357 / JCM 12722 / SRRC 167), this protein is Probable rhamnogalacturonate lyase B (rglB).